We begin with the raw amino-acid sequence, 472 residues long: Glutamate--tRNA ligase (472 aa).

The 'HIGH' region motif lies at 9 to 19 (PSPTGPLHIGS). The 'KMSKS' region motif lies at 237–241 (KLSKR). An ATP-binding site is contributed by K240.

The protein belongs to the class-I aminoacyl-tRNA synthetase family. Glutamate--tRNA ligase type 1 subfamily. As to quaternary structure, monomer.

The protein resides in the cytoplasm. The catalysed reaction is tRNA(Glu) + L-glutamate + ATP = L-glutamyl-tRNA(Glu) + AMP + diphosphate. Catalyzes the attachment of glutamate to tRNA(Glu) in a two-step reaction: glutamate is first activated by ATP to form Glu-AMP and then transferred to the acceptor end of tRNA(Glu). This chain is Glutamate--tRNA ligase, found in Buchnera aphidicola subsp. Baizongia pistaciae (strain Bp).